The chain runs to 201 residues: UPF0301 protein BP0319 (201 aa).

Belongs to the UPF0301 (AlgH) family.

The chain is UPF0301 protein BP0319 from Bordetella pertussis (strain Tohama I / ATCC BAA-589 / NCTC 13251).